We begin with the raw amino-acid sequence, 503 residues long: Putative cytochrome P450 71A28 (503 aa).

Residues 1 to 21 form a helical membrane-spanning segment; the sequence is MILISLCFTTFLAFLFLNPLL. Cys-443 contributes to the heme binding site.

Belongs to the cytochrome P450 family. The cofactor is heme.

The protein resides in the membrane. In Arabidopsis thaliana (Mouse-ear cress), this protein is Putative cytochrome P450 71A28 (CYP71A28).